The primary structure comprises 232 residues: Ribose-5-phosphate isomerase A (232 aa).

Substrate-binding positions include serine 29–threonine 32, aspartate 86–aspartate 89, and lysine 99–glycine 102. Glutamate 108 (proton acceptor) is an active-site residue. Residue lysine 126 participates in substrate binding.

It belongs to the ribose 5-phosphate isomerase family. As to quaternary structure, homodimer.

The catalysed reaction is aldehydo-D-ribose 5-phosphate = D-ribulose 5-phosphate. The protein operates within carbohydrate degradation; pentose phosphate pathway; D-ribose 5-phosphate from D-ribulose 5-phosphate (non-oxidative stage): step 1/1. Functionally, catalyzes the reversible conversion of ribose-5-phosphate to ribulose 5-phosphate. The sequence is that of Ribose-5-phosphate isomerase A from Synechococcus sp. (strain ATCC 27144 / PCC 6301 / SAUG 1402/1) (Anacystis nidulans).